The following is a 394-amino-acid chain: Chorismate synthase (394 aa).

Positions 40 and 46 each coordinate NADP(+). FMN is bound by residues 135–137 (RAS), 255–256 (QA), Gly302, 317–321 (KPISS), and Arg343.

It belongs to the chorismate synthase family. As to quaternary structure, homotetramer. It depends on FMNH2 as a cofactor.

It carries out the reaction 5-O-(1-carboxyvinyl)-3-phosphoshikimate = chorismate + phosphate. The protein operates within metabolic intermediate biosynthesis; chorismate biosynthesis; chorismate from D-erythrose 4-phosphate and phosphoenolpyruvate: step 7/7. In terms of biological role, catalyzes the anti-1,4-elimination of the C-3 phosphate and the C-6 proR hydrogen from 5-enolpyruvylshikimate-3-phosphate (EPSP) to yield chorismate, which is the branch point compound that serves as the starting substrate for the three terminal pathways of aromatic amino acid biosynthesis. This reaction introduces a second double bond into the aromatic ring system. This is Chorismate synthase from Parafrankia sp. (strain EAN1pec).